Consider the following 636-residue polypeptide: MTVSKILKQVINRKTTRQIVIAQLGLGSLASLKQLIIEQLQLISDHRVTLKIFSQIEPNLHTFISDTELAELFSSKPNTSLSLAAIEGCQRIIVNDGKLKIDFHLGSYAQQLQQLPIVSSGFIDGWNMADNLAQEQLDSALFWQMAKLAHNDCLFCLEPTLTPEAQQQSLLLAEQVGLYSELPLKNDDTLFQERAALRAQSHQQQAPFPICPAALTPVENDIGIAIIGGGVASACLALSLAERDQRVTLFCEDDALAQAASGNKQGAIYPLLTPDNNTLSQYFQQAYLFSLQRLKTLAARGHKIDFDLCGVVHTGHDERSRKRVAKITHGHNWEPNIALAIAAEQASNIAGVKLDDGGLFYPQGGWVSPQDFTRAAFNQAQAISDASLKLNTQITGIHSKDNVWYLSSKTERFGPFKALIVANGKSITQYPQTQYLQATGFRGQVSHVPSRAKLSKLSAVLCAHGYMTPSNNDLHCLGASYVKNAADTRYSPSEQVENLHKIQHSYIGQDWIEDIDVSGHSARVDVRMVTRDHAPMMGPVPNLDAILALYQQHQLTPESRQFWQTHAAPTHKNLYVLGGLGSRGLCSGPLAAEALAAQICGEPMPISLDFVSLLNPNRMWMRKLLKGKALEMSGKS.

A tRNA (mnm(5)s(2)U34)-methyltransferase region spans residues methionine 1 to histidine 202. Positions isoleucine 227–serine 636 are FAD-dependent cmnm(5)s(2)U34 oxidoreductase.

The protein in the N-terminal section; belongs to the methyltransferase superfamily. tRNA (mnm(5)s(2)U34)-methyltransferase family. In the C-terminal section; belongs to the DAO family. FAD is required as a cofactor.

It localises to the cytoplasm. It catalyses the reaction 5-aminomethyl-2-thiouridine(34) in tRNA + S-adenosyl-L-methionine = 5-methylaminomethyl-2-thiouridine(34) in tRNA + S-adenosyl-L-homocysteine + H(+). In terms of biological role, catalyzes the last two steps in the biosynthesis of 5-methylaminomethyl-2-thiouridine (mnm(5)s(2)U) at the wobble position (U34) in tRNA. Catalyzes the FAD-dependent demodification of cmnm(5)s(2)U34 to nm(5)s(2)U34, followed by the transfer of a methyl group from S-adenosyl-L-methionine to nm(5)s(2)U34, to form mnm(5)s(2)U34. The chain is tRNA 5-methylaminomethyl-2-thiouridine biosynthesis bifunctional protein MnmC from Shewanella halifaxensis (strain HAW-EB4).